Reading from the N-terminus, the 313-residue chain is MDYLLSLIGSLLLVICVMVGVAFLTLLERKVLGYIQIRKGPNKVGFMGLLQPFSDAVKLFTKEQTYPLLSNYIFYYFSPIFSLFLSLLIWMSMPYLIKLYSFNLGVLFFLCITSLGVYTVMVAGWSSNSNYALLGGLRAVAQTISYEVSLALILLSFIFLIGNYNFLNFFMYQKYMWFIVFCFPLGLVWFASCLAETNRTPFDFAEGESELVSGFNVEYSSGGFALIFLAEYSSILFMSMLFSVIFLGSDIYSILFFFKLTIISFFFIWVRGTLPRFRYDKLMYLAWKSFLPMSLNYLFFFIGVKIFILSMLF.

The next 8 helical transmembrane spans lie at 7–27, 73–93, 104–124, 150–170, 175–195, 226–246, 250–270, and 293–313; these read LIGS…LTLL, IFYY…WMSM, LGVL…MVAG, LALI…LNFF, YMWF…SCLA, LIFL…SVIF, DIYS…FIWV, and MSLN…SMLF.

This sequence belongs to the complex I subunit 1 family.

Its subcellular location is the mitochondrion inner membrane. The enzyme catalyses a ubiquinone + NADH + 5 H(+)(in) = a ubiquinol + NAD(+) + 4 H(+)(out). Core subunit of the mitochondrial membrane respiratory chain NADH dehydrogenase (Complex I) that is believed to belong to the minimal assembly required for catalysis. Complex I functions in the transfer of electrons from NADH to the respiratory chain. The immediate electron acceptor for the enzyme is believed to be ubiquinone. The chain is NADH-ubiquinone oxidoreductase chain 1 from Aedes aegypti (Yellowfever mosquito).